We begin with the raw amino-acid sequence, 190 residues long: CASP-like protein 1U3 (190 aa).

Over 1–24 (MNGATVQPSYKEAGPVRYHPMHDC) the chain is Cytoplasmic. Residues 25–45 (LSLILRLLTLGATIAAIVAML) form a helical membrane-spanning segment. The Extracellular segment spans residues 46 to 70 (KSTQTVPTLLGPHTARWKDFPAFEW). A helical membrane pass occupies residues 71–91 (FVIGNSIVLVYAALGTLAACL). The Cytoplasmic segment spans residues 92–113 (SLFTRRGPLSYTKTAWLTFLCD). Residues 114 to 134 (FICSCALISAGSTALGVAWIG) form a helical membrane-spanning segment. Topologically, residues 135 to 158 (KHGQHSAFWNAVCPTVDRFCDYVQ) are extracellular. Residues 159–179 (GALIATLCGFIFQALSTVIAA) traverse the membrane as a helical segment. The Cytoplasmic segment spans residues 180–190 (SALHNLATHRH).

The protein belongs to the Casparian strip membrane proteins (CASP) family. As to quaternary structure, homodimer and heterodimers.

The protein resides in the cell membrane. This Physcomitrium patens (Spreading-leaved earth moss) protein is CASP-like protein 1U3.